Here is a 433-residue protein sequence, read N- to C-terminus: Vesicle-associated protein (433 aa).

Tandem repeats lie at residues 112-122 (GGGIGGGLGGG) and 219-229 (GGGIGGGLGGG). The segment at 112 to 350 (GGGIGGGLGG…GGIGGGLGGG (239 aa)) is 3 X 11 AA repeats of G-G-G-I-G-G-G-L-G-G-G. Positions 266-274 (VDGKKKGKG) match the Nuclear localization signal motif. Residues 340 to 350 (GGGIGGGLGGG) form repeat 3. Disordered regions lie at residues 366–389 (RVGGDISGPDLDVSGPDLDIDGDG) and 411–433 (HGKGDIDVDADVDIERPDLNVSG). A compositionally biased stretch (basic and acidic residues) spans 423 to 433 (DIERPDLNVSG).

As to expression, egg cortex.

It is found in the microsome membrane. The protein resides in the nucleus. The protein localises to the endoplasmic reticulum membrane. May function as a multidomain RNA-binding protein. May play a role in nuclear RNA processing and in early development. The polypeptide is Vesicle-associated protein (VAP-1) (Strongylocentrotus purpuratus (Purple sea urchin)).